The chain runs to 587 residues: 5-aminolevulinate synthase, erythroid-specific, mitochondrial (587 aa).

The N-terminal 49 residues, 1 to 49, are a transit peptide targeting the mitochondrion; that stretch reads MVTAAMLLQRCPVLIRSPTGLLGKMIKTHQFLFGIGRCPILATQGPSFS. Residue R163 participates in succinyl-CoA binding. 2 residues coordinate pyridoxal 5'-phosphate: C258 and F259. S280 and K299 together coordinate succinyl-CoA. 3 residues coordinate pyridoxal 5'-phosphate: S332, H360, and T388. Residue K391 is part of the active site. An N6-(pyridoxal phosphate)lysine modification is found at K391. Residues T420 and T421 each coordinate pyridoxal 5'-phosphate. T508 lines the succinyl-CoA pocket.

The protein belongs to the class-II pyridoxal-phosphate-dependent aminotransferase family. Homodimer. Interacts with SUCLA2. The cofactor is pyridoxal 5'-phosphate.

The protein localises to the mitochondrion inner membrane. The catalysed reaction is succinyl-CoA + glycine + H(+) = 5-aminolevulinate + CO2 + CoA. Its pathway is porphyrin-containing compound metabolism; protoporphyrin-IX biosynthesis; 5-aminolevulinate from glycine: step 1/1. Its function is as follows. Catalyzes the pyridoxal 5'-phosphate (PLP)-dependent condensation of succinyl-CoA and glycine to form aminolevulinic acid (ALA), with CoA and CO2 as by-products. Contributes significantly to heme formation during erythropoiesis. The chain is 5-aminolevulinate synthase, erythroid-specific, mitochondrial (ALAS2) from Bos taurus (Bovine).